The sequence spans 292 residues: Protein CHLOROPLAST ENHANCING STRESS TOLERANCE, chloroplastic (292 aa).

Positions 1-15 (MALLSPPSPPPPLPP) are enriched in pro residues. Residues 1–67 (MALLSPPSPP…RSSRRRRRVA (67 aa)) constitute a chloroplast transit peptide. Disordered stretches follow at residues 1-119 (MALL…DLED) and 206-225 (MEAPKKKSKPGKSVYAKATD). 2 stretches are compositionally biased toward low complexity: residues 49-58 (STANARAYSR) and 94-107 (ASSDGAAGDIASSA). The chain crosses the membrane as a helical span at residues 267–287 (ALYLLTAFPVIIGISVVLILF).

This sequence belongs to the Y3IP1/CEST family.

The protein localises to the plastid. It localises to the chloroplast thylakoid membrane. In terms of biological role, involved in light-induced chloroplast development and growth. Involved in the plant response to abiotic and photooxidative stresses. May be involved in the suppression of photooxidative damage. The polypeptide is Protein CHLOROPLAST ENHANCING STRESS TOLERANCE, chloroplastic (Oryza sativa subsp. indica (Rice)).